The sequence spans 224 residues: Deoxyribose-phosphate aldolase (224 aa).

D94 functions as the Proton donor/acceptor in the catalytic mechanism. The active-site Schiff-base intermediate with acetaldehyde is K156. K184 serves as the catalytic Proton donor/acceptor.

It belongs to the DeoC/FbaB aldolase family. DeoC type 1 subfamily.

It localises to the cytoplasm. The enzyme catalyses 2-deoxy-D-ribose 5-phosphate = D-glyceraldehyde 3-phosphate + acetaldehyde. Its pathway is carbohydrate degradation; 2-deoxy-D-ribose 1-phosphate degradation; D-glyceraldehyde 3-phosphate and acetaldehyde from 2-deoxy-alpha-D-ribose 1-phosphate: step 2/2. Its function is as follows. Catalyzes a reversible aldol reaction between acetaldehyde and D-glyceraldehyde 3-phosphate to generate 2-deoxy-D-ribose 5-phosphate. The polypeptide is Deoxyribose-phosphate aldolase (Methanocella arvoryzae (strain DSM 22066 / NBRC 105507 / MRE50)).